Consider the following 454-residue polypeptide: tRNA modification GTPase MnmE (454 aa).

R23, E80, and K120 together coordinate (6S)-5-formyl-5,6,7,8-tetrahydrofolate. A TrmE-type G domain is found at G216–G377. N226 contacts K(+). GTP contacts are provided by residues N226–S231, T245–T251, D270–G273, N335–D338, and S358–R360. S230 lines the Mg(2+) pocket. K(+) is bound by residues T245, I247, and T250. A Mg(2+)-binding site is contributed by T251. (6S)-5-formyl-5,6,7,8-tetrahydrofolate is bound at residue K454.

The protein belongs to the TRAFAC class TrmE-Era-EngA-EngB-Septin-like GTPase superfamily. TrmE GTPase family. Homodimer. Heterotetramer of two MnmE and two MnmG subunits. Requires K(+) as cofactor.

The protein localises to the cytoplasm. Exhibits a very high intrinsic GTPase hydrolysis rate. Involved in the addition of a carboxymethylaminomethyl (cmnm) group at the wobble position (U34) of certain tRNAs, forming tRNA-cmnm(5)s(2)U34. In Enterobacter sp. (strain 638), this protein is tRNA modification GTPase MnmE.